Here is a 581-residue protein sequence, read N- to C-terminus: Proline--tRNA ligase (581 aa).

It belongs to the class-II aminoacyl-tRNA synthetase family. ProS type 1 subfamily. Homodimer.

It is found in the cytoplasm. The catalysed reaction is tRNA(Pro) + L-proline + ATP = L-prolyl-tRNA(Pro) + AMP + diphosphate. Catalyzes the attachment of proline to tRNA(Pro) in a two-step reaction: proline is first activated by ATP to form Pro-AMP and then transferred to the acceptor end of tRNA(Pro). As ProRS can inadvertently accommodate and process non-cognate amino acids such as alanine and cysteine, to avoid such errors it has two additional distinct editing activities against alanine. One activity is designated as 'pretransfer' editing and involves the tRNA(Pro)-independent hydrolysis of activated Ala-AMP. The other activity is designated 'posttransfer' editing and involves deacylation of mischarged Ala-tRNA(Pro). The misacylated Cys-tRNA(Pro) is not edited by ProRS. This Chlamydia trachomatis serovar D (strain ATCC VR-885 / DSM 19411 / UW-3/Cx) protein is Proline--tRNA ligase.